A 199-amino-acid polypeptide reads, in one-letter code: Probable thymidylate kinase (199 aa).

Position 13–20 (13–20) interacts with ATP; it reads GIDGAGKT.

Belongs to the thymidylate kinase family.

The catalysed reaction is dTMP + ATP = dTDP + ADP. In Staphylothermus marinus (strain ATCC 43588 / DSM 3639 / JCM 9404 / F1), this protein is Probable thymidylate kinase.